The primary structure comprises 1213 residues: uncharacterized protein (1213 aa).

Positions 289–390 (ATKRQGWLLR…WGSVINNARE (102 aa)) constitute a PH domain. The VASt domain occupies 776-945 (LDDIVFDRVY…EVNFLEKATR (170 aa)). Helical transmembrane passes span 996–1016 (LFLQ…FHIF) and 1025–1045 (FLVI…FCFG).

It is found in the cytoplasm. Its subcellular location is the nucleus membrane. It localises to the cytoskeleton. The protein localises to the microtubule organizing center. The protein resides in the spindle pole body. This is an uncharacterized protein from Schizosaccharomyces pombe (strain 972 / ATCC 24843) (Fission yeast).